A 231-amino-acid chain; its full sequence is Ion-translocating oxidoreductase complex subunit E (231 aa).

Helical transmembrane passes span 18–38, 39–59, 63–83, 86–106, 125–145, and 182–202; these read ALVQ…ATNA, LGLG…ISTL, TPAE…VSAV, LINA…PLIV, ALSA…MFVL, and PFLL…MLAG.

It belongs to the NqrDE/RnfAE family. The complex is composed of six subunits: RsxA, RsxB, RsxC, RsxD, RsxE and RsxG.

Its subcellular location is the cell inner membrane. In terms of biological role, part of a membrane-bound complex that couples electron transfer with translocation of ions across the membrane. Required to maintain the reduced state of SoxR. The chain is Ion-translocating oxidoreductase complex subunit E from Shigella flexneri serotype 5b (strain 8401).